We begin with the raw amino-acid sequence, 494 residues long: Alpha-amylase-related protein (494 aa).

Residues 1 to 20 (MIKFALALTLCLAGASLSLA) form the signal peptide. At Gln21 the chain carries Pyrrolidone carboxylic acid. A disulfide bridge links Cys48 with Cys104. The Ca(2+) site is built by Asn118, Gln169, and Asp178. The cysteines at positions 157 and 171 are disulfide-linked. Residue Arg206 coordinates chloride. Asp208 acts as the Nucleophile in catalysis. His212 contributes to the Ca(2+) binding site. The active-site Proton donor is the Glu245. Positions 308 and 343 each coordinate chloride. 3 disulfide bridges follow: Cys376/Cys382, Cys418/Cys441, and Cys448/Cys460.

This sequence belongs to the glycosyl hydrolase 13 family. Monomer. Ca(2+) is required as a cofactor. Chloride serves as cofactor.

The protein localises to the secreted. The enzyme catalyses Endohydrolysis of (1-&gt;4)-alpha-D-glucosidic linkages in polysaccharides containing three or more (1-&gt;4)-alpha-linked D-glucose units.. This chain is Alpha-amylase-related protein (Amyrel), found in Drosophila kikkawai (Fruit fly).